We begin with the raw amino-acid sequence, 398 residues long: 1-deoxy-D-xylulose 5-phosphate reductoisomerase (398 aa).

NADPH-binding residues include Thr-11, Gly-12, Ser-13, Ile-14, and Asn-125. Residue Lys-126 participates in 1-deoxy-D-xylulose 5-phosphate binding. Glu-127 is an NADPH binding site. Mn(2+) is bound at residue Asp-151. 4 residues coordinate 1-deoxy-D-xylulose 5-phosphate: Ser-152, Glu-153, Ser-186, and His-209. Position 153 (Glu-153) interacts with Mn(2+). Gly-215 lines the NADPH pocket. 1-deoxy-D-xylulose 5-phosphate-binding residues include Ser-222, Asn-227, Lys-228, and Glu-231. Glu-231 is a binding site for Mn(2+).

This sequence belongs to the DXR family. Mg(2+) is required as a cofactor. Requires Mn(2+) as cofactor.

It catalyses the reaction 2-C-methyl-D-erythritol 4-phosphate + NADP(+) = 1-deoxy-D-xylulose 5-phosphate + NADPH + H(+). Its pathway is isoprenoid biosynthesis; isopentenyl diphosphate biosynthesis via DXP pathway; isopentenyl diphosphate from 1-deoxy-D-xylulose 5-phosphate: step 1/6. In terms of biological role, catalyzes the NADPH-dependent rearrangement and reduction of 1-deoxy-D-xylulose-5-phosphate (DXP) to 2-C-methyl-D-erythritol 4-phosphate (MEP). The polypeptide is 1-deoxy-D-xylulose 5-phosphate reductoisomerase (Acinetobacter baumannii (strain ACICU)).